Here is a 271-residue protein sequence, read N- to C-terminus: Ribosomal RNA small subunit methyltransferase A (271 aa).

His11, Leu13, Gly38, Glu58, Asp86, and Asn101 together coordinate S-adenosyl-L-methionine.

The protein belongs to the class I-like SAM-binding methyltransferase superfamily. rRNA adenine N(6)-methyltransferase family. RsmA subfamily.

The protein localises to the cytoplasm. The catalysed reaction is adenosine(1518)/adenosine(1519) in 16S rRNA + 4 S-adenosyl-L-methionine = N(6)-dimethyladenosine(1518)/N(6)-dimethyladenosine(1519) in 16S rRNA + 4 S-adenosyl-L-homocysteine + 4 H(+). Its function is as follows. Specifically dimethylates two adjacent adenosines (A1518 and A1519) in the loop of a conserved hairpin near the 3'-end of 16S rRNA in the 30S particle. May play a critical role in biogenesis of 30S subunits. This chain is Ribosomal RNA small subunit methyltransferase A, found in Helicobacter acinonychis (strain Sheeba).